A 95-amino-acid polypeptide reads, in one-letter code: Defensin-1 (95 aa).

An N-terminal signal peptide occupies residues 1 to 19; sequence MKIYFIVGLLFMAMVAIMA. Residues 20–43 constitute a propeptide that is removed on maturation; sequence APVEDEFEPLEHFENEERADRHRR. Intrachain disulfides connect cysteine 46-cysteine 74, cysteine 60-cysteine 79, and cysteine 64-cysteine 81. Phenylalanine 94 carries the phenylalanine amide modification.

Its subcellular location is the secreted. Functionally, found in royal jelly and in hemolymph, potent antibacterial protein against Gram-positive bacteria at low concentration. The protein is Defensin-1 of Apis mellifera carnica (Carniolan honeybee).